A 553-amino-acid chain; its full sequence is Probable malate:quinone oxidoreductase (553 aa).

A disordered region spans residues 524 to 553 (PPPKIDVNTPSQATGTAPARPAKASADMAL).

It belongs to the MQO family. Requires FAD as cofactor.

It carries out the reaction (S)-malate + a quinone = a quinol + oxaloacetate. It participates in carbohydrate metabolism; tricarboxylic acid cycle; oxaloacetate from (S)-malate (quinone route): step 1/1. The polypeptide is Probable malate:quinone oxidoreductase (Burkholderia lata (strain ATCC 17760 / DSM 23089 / LMG 22485 / NCIMB 9086 / R18194 / 383)).